Here is a 235-residue protein sequence, read N- to C-terminus: UPF0173 metal-dependent hydrolase Oant_3663 (235 aa).

Belongs to the UPF0173 family.

The chain is UPF0173 metal-dependent hydrolase Oant_3663 from Brucella anthropi (strain ATCC 49188 / DSM 6882 / CCUG 24695 / JCM 21032 / LMG 3331 / NBRC 15819 / NCTC 12168 / Alc 37) (Ochrobactrum anthropi).